The chain runs to 207 residues: Small ribosomal subunit protein uS5 (207 aa).

A disordered region spans residues 1-51; that stretch reads MTDTPTKQEITSKNDKVPGAIPGEQKKNNRNNDRKRNRRGDSKNLERDSDW. Basic and acidic residues predominate over residues 24–51; the sequence is EQKKNNRNNDRKRNRRGDSKNLERDSDW. The region spanning 51–114 is the S5 DRBM domain; sequence WQERVVQIRR…SDGKKNLVRV (64 aa).

The protein belongs to the universal ribosomal protein uS5 family. In terms of assembly, part of the 30S ribosomal subunit. Contacts proteins S4 and S8.

Functionally, with S4 and S12 plays an important role in translational accuracy. Its function is as follows. Located at the back of the 30S subunit body where it stabilizes the conformation of the head with respect to the body. The sequence is that of Small ribosomal subunit protein uS5 from Prochlorococcus marinus (strain MIT 9312).